Reading from the N-terminus, the 379-residue chain is Putative acetyl-CoA C-acetyltransferase VraB (379 aa).

Residue cysteine 86 is the Acyl-thioester intermediate of the active site. The Proton acceptor role is filled by histidine 338.

Belongs to the thiolase-like superfamily. Thiolase family.

This chain is Putative acetyl-CoA C-acetyltransferase VraB (vraB), found in Staphylococcus aureus (strain Mu3 / ATCC 700698).